We begin with the raw amino-acid sequence, 58 residues long: Large ribosomal subunit protein uL30 (58 aa).

This sequence belongs to the universal ribosomal protein uL30 family. As to quaternary structure, part of the 50S ribosomal subunit.

The protein is Large ribosomal subunit protein uL30 of Porphyromonas gingivalis (strain ATCC 33277 / DSM 20709 / CIP 103683 / JCM 12257 / NCTC 11834 / 2561).